The sequence spans 295 residues: MSRDLPSLNALRAFEAAARLHSISLAAEELHVTHGAVSRQVRLLEDDLGVALFGKDGRGVKLTDSGVRLRDACGDAFERLRGVCAELRRQTAEAPFVLGVPGSLLARWFIPRLDQLNRALPDLRLQLSTSEGEFDPRRPGLDAMLWFAEPPWPADMQVFELAPERMGPVVSPRLAQETGLAQAPAARLLQEPLLHTASRPQAWPAWAASQGLAAEALRYGQGFEHLYYLLEAAVAGLGVAIAPEPLVRDDLAAGRLAAPWGFIETDARLALWVPARLHDPRAGRLAQWLREQLAG.

Residues 6-63 (PSLNALRAFEAAARLHSISLAAEELHVTHGAVSRQVRLLEDDLGVALFGKDGRGVKLT) form the HTH lysR-type domain. Residues 23–42 (ISLAAEELHVTHGAVSRQVR) constitute a DNA-binding region (H-T-H motif).

Belongs to the LysR transcriptional regulatory family. In terms of assembly, homotetramer.

In terms of biological role, activates the expression of the trpBA genes, which encode the two tryptophan synthase subunits, and represses initiation at its own promoter. Acts by binding to two adjacent sites in the intergenic region. In the absence of the inducer indoleglycerol phosphate (InGP), TrpI binds to site I. In the presence of InGP, TrpI binds to site I and site II. Binding to site II is site I dependent. InGP strongly stimulates binding to site II and is required for maximal activation of trpBA. This chain is HTH-type transcriptional regulator TrpI, found in Pseudomonas aeruginosa (strain ATCC 15692 / DSM 22644 / CIP 104116 / JCM 14847 / LMG 12228 / 1C / PRS 101 / PAO1).